Here is a 210-residue protein sequence, read N- to C-terminus: Uracil phosphoribosyltransferase (210 aa).

5-phospho-alpha-D-ribose 1-diphosphate is bound by residues arginine 78, arginine 103, and 130–138; that span reads DPMLATGGT. Uracil-binding positions include isoleucine 193 and 198–200; that span reads GDA. Aspartate 199 contacts 5-phospho-alpha-D-ribose 1-diphosphate.

This sequence belongs to the UPRTase family. Mg(2+) serves as cofactor.

The enzyme catalyses UMP + diphosphate = 5-phospho-alpha-D-ribose 1-diphosphate + uracil. It participates in pyrimidine metabolism; UMP biosynthesis via salvage pathway; UMP from uracil: step 1/1. Allosterically activated by GTP. Its function is as follows. Catalyzes the conversion of uracil and 5-phospho-alpha-D-ribose 1-diphosphate (PRPP) to UMP and diphosphate. The protein is Uracil phosphoribosyltransferase of Stenotrophomonas maltophilia (strain R551-3).